Consider the following 152-residue polypeptide: Deoxyuridine 5'-triphosphate nucleotidohydrolase (152 aa).

Residues 71–73 (RSG), Asn-84, 88–90 (LID), and Met-98 each bind substrate.

This sequence belongs to the dUTPase family. Requires Mg(2+) as cofactor.

It carries out the reaction dUTP + H2O = dUMP + diphosphate + H(+). It functions in the pathway pyrimidine metabolism; dUMP biosynthesis; dUMP from dCTP (dUTP route): step 2/2. In terms of biological role, this enzyme is involved in nucleotide metabolism: it produces dUMP, the immediate precursor of thymidine nucleotides and it decreases the intracellular concentration of dUTP so that uracil cannot be incorporated into DNA. In Aeromonas salmonicida (strain A449), this protein is Deoxyuridine 5'-triphosphate nucleotidohydrolase.